We begin with the raw amino-acid sequence, 338 residues long: UPF0284 protein PAE0372 (338 aa).

This sequence belongs to the UPF0284 family.

The chain is UPF0284 protein PAE0372 from Pyrobaculum aerophilum (strain ATCC 51768 / DSM 7523 / JCM 9630 / CIP 104966 / NBRC 100827 / IM2).